Consider the following 263-residue polypeptide: uncharacterized protein (263 aa).

Belongs to the A.longa ORF167/ORF288 family.

The protein resides in the plastid. This is an uncharacterized protein from Euglena longa (Euglenophycean alga).